The following is a 400-amino-acid chain: MSSKLVLVLNCGSSSLKFAIIDALNGDEYLSGLAECFHLPEARIKWKMDGGKHEAALGAGAAHSEALNFIVNTILAQKPELSAQLTAIGHRIVHGGEKYTSSVVIDETVIQGIKDSASFAPLHNPAHLIGIAEALKSFPHLADKNVAVFDTAFHQTMPEESYLYALPYKLYKEHGIRRYGAHGTSHFYVTQEAAKMLNKPVEEVNIITCHLGNGGSVSAIRNGKCVDTSMGLTPLEGLVMGTRSGDIDPAIVFHLHDALGMSVDDINKLLTKESGLLGLTEVTSDCRYVEDNYATKEDAKRAMDVYCHRLAKYIGSYTALMEGRLDAVVFTGGIGENAAMVRELSLGKLGVLGFEVDHERNLAARFGKSGFINKEGTTLAMVIPTNEELVIAQDACRLTA.

Mg(2+) is bound at residue Asn-10. Residue Lys-17 coordinates ATP. Residue Arg-91 coordinates substrate. Asp-150 serves as the catalytic Proton donor/acceptor. ATP-binding positions include 210-214 (HLGNG), 285-287 (DCR), and 333-337 (GIGEN). Glu-387 serves as a coordination point for Mg(2+).

Belongs to the acetokinase family. In terms of assembly, homodimer. The cofactor is Mg(2+). Mn(2+) serves as cofactor.

Its subcellular location is the cytoplasm. It catalyses the reaction acetate + ATP = acetyl phosphate + ADP. The protein operates within metabolic intermediate biosynthesis; acetyl-CoA biosynthesis; acetyl-CoA from acetate: step 1/2. Its function is as follows. Catalyzes the formation of acetyl phosphate from acetate and ATP. Can also catalyze the reverse reaction. This chain is Acetate kinase, found in Cronobacter sakazakii (strain ATCC BAA-894) (Enterobacter sakazakii).